Consider the following 462-residue polypeptide: Arginine biosynthesis bifunctional protein ArgJ, mitochondrial (462 aa).

The substrate site is built by Thr189, Lys215, Thr236, Glu327, Asn457, and Ser462. Catalysis depends on Thr236, which acts as the Nucleophile.

Belongs to the ArgJ family. As to quaternary structure, heterodimer of an alpha and a beta chain. The alpha and beta chains are autoproteolytically processed from a single precursor protein within the mitochondrion.

It is found in the mitochondrion matrix. The catalysed reaction is N(2)-acetyl-L-ornithine + L-glutamate = N-acetyl-L-glutamate + L-ornithine. The enzyme catalyses L-glutamate + acetyl-CoA = N-acetyl-L-glutamate + CoA + H(+). Its pathway is amino-acid biosynthesis; L-arginine biosynthesis; L-ornithine and N-acetyl-L-glutamate from L-glutamate and N(2)-acetyl-L-ornithine (cyclic): step 1/1. It functions in the pathway amino-acid biosynthesis; L-arginine biosynthesis; N(2)-acetyl-L-ornithine from L-glutamate: step 1/4. Functionally, catalyzes two activities which are involved in the cyclic version of arginine biosynthesis: the synthesis of acetylglutamate from glutamate and acetyl-CoA, and of ornithine by transacetylation between acetylornithine and glutamate. The chain is Arginine biosynthesis bifunctional protein ArgJ, mitochondrial from Postia placenta (strain ATCC 44394 / Madison 698-R) (Brown rot fungus).